The chain runs to 163 residues: MDPGRSHIETIIESSTHKFILFDEPTEETIPYFKDLMKKNSCINIVRCCEINYDASLFEGVKIHELCFKDGNVPPKDIIERWLEILKQAFIENGKQKTTVGIHCIAGLGRTPLLVCIALIEDGMKPLQAVEFVRSKRKNAINSPQIKFLKEYKASKKAGCKIM.

One can recognise a Tyrosine-protein phosphatase domain in the interval 10–161 (TIIESSTHKF…YKASKKAGCK (152 aa)). C49 and C104 are oxidised to a cystine. The Proton donor role is filled by D70. C104 functions as the Phosphocysteine intermediate in the catalytic mechanism. Position 105 to 110 (105 to 110 (IAGLGR)) interacts with phosphate. Residue R110 coordinates substrate. C160 is modified (cysteine methyl ester). Residue C160 is the site of S-farnesyl cysteine attachment. A propeptide spans 161 to 163 (KIM) (removed in mature form).

Belongs to the protein-tyrosine phosphatase family.

The protein resides in the membrane. It carries out the reaction O-phospho-L-tyrosyl-[protein] + H2O = L-tyrosyl-[protein] + phosphate. This Dictyostelium discoideum (Social amoeba) protein is Probable protein tyrosine phosphatase type IVA B.